Here is a 40-residue protein sequence, read N- to C-terminus: Photosystem II reaction center protein J (40 aa).

A helical transmembrane segment spans residues 8-28 (IPLWIIGTVAGILVIGLVGVF).

It belongs to the PsbJ family. In terms of assembly, PSII is composed of 1 copy each of membrane proteins PsbA, PsbB, PsbC, PsbD, PsbE, PsbF, PsbH, PsbI, PsbJ, PsbK, PsbL, PsbM, PsbT, PsbX, PsbY, PsbZ, Psb30/Ycf12, at least 3 peripheral proteins of the oxygen-evolving complex and a large number of cofactors. It forms dimeric complexes.

Its subcellular location is the plastid. The protein localises to the chloroplast thylakoid membrane. Functionally, one of the components of the core complex of photosystem II (PSII). PSII is a light-driven water:plastoquinone oxidoreductase that uses light energy to abstract electrons from H(2)O, generating O(2) and a proton gradient subsequently used for ATP formation. It consists of a core antenna complex that captures photons, and an electron transfer chain that converts photonic excitation into a charge separation. The protein is Photosystem II reaction center protein J of Helianthus annuus (Common sunflower).